The sequence spans 1235 residues: N-acetylglucosamine-1-phosphotransferase subunits alpha/beta (1235 aa).

A helical membrane pass occupies residues 22–42; it reads VCFVGVVVTIVSAFQFGEVVL. N-linked (GlcNAc...) asparagine glycosylation is found at N83, N114, N148, and N179. 4 cysteine pairs are disulfide-bonded: C438/C461, C452/C468, C505/C528, and C519/C535. LNR repeat units lie at residues 438–473 and 505–545; these read CAEG…GNTA and CNQG…ELYK. The Ca(2+) site is built by D449, D464, D467, D516, D531, and D534. N614 and N729 each carry an N-linked (GlcNAc...) asparagine glycan. Positions 699-823 constitute a DMAP1-binding domain; it reads NISLLPKEAQ…AQPTLGVTVS (125 aa). Disordered regions lie at residues 751–783 and 830–850; these read QART…HRSE and LIVP…AEGN. Residues 837–848 show a composition bias toward basic and acidic residues; it reads HLPKEEESDRAE. The EF-hand domain occupies 984 to 1019; the sequence is VQPLNISQVFHEVDTDQSGVLSDREIRTLATRIHDL. N-linked (GlcNAc...) asparagine glycosylation is present at N988. Ca(2+) is bound by residues D997, D999, S1001, and E1008. An N-linked (GlcNAc...) asparagine glycan is attached at N1108. Residues 1194–1214 form a helical membrane-spanning segment; the sequence is VLATLIIFTIFSFFAEQIIAL.

The protein belongs to the stealth family. Hexamer of two alpha, two beta and two gamma (GNPTG) subunits; disulfide-linked. The alpha and/or the beta subunits of the enzyme constitute the catalytic subunits. Interacts with LYSET; facilitates proper localization of GNPTAB. In terms of processing, the alpha- and beta-subunits are generated by a proteolytic cleavage by MBTPS1 protease at the Lys-907-Asp-908 bond.

The protein resides in the golgi apparatus membrane. The enzyme catalyses N(4)-[alpha-D-mannosyl-(1-&gt;2)-alpha-D-mannosyl-(glycan)]-L-asparaginyl-[protein] + UDP-N-acetyl-alpha-D-glucosamine = N(4)-[6-(N-acetyl-alpha-D-glucosaminyl-1-phospho)-alpha-D-mannosyl-(1-&gt;2)-alpha-D-mannosyl-(glycan)]-L-asparaginyl-[protein] + UMP + H(+). In terms of biological role, catalyzes the formation of mannose 6-phosphate (M6P) markers on high mannose type oligosaccharides in the Golgi apparatus. M6P residues are required to bind to the M6P receptors (MPR), which mediate the vesicular transport of lysosomal enzymes to the endosomal/prelysosomal compartment. The chain is N-acetylglucosamine-1-phosphotransferase subunits alpha/beta (Gnptab) from Mus musculus (Mouse).